The sequence spans 136 residues: Large-conductance mechanosensitive channel (136 aa).

2 helical membrane passes run 9 to 29 (AFASRGNVIDMAVGIIIGAAF) and 79 to 99 (IQTVIDFTIIAFAIFMGLKAI).

This sequence belongs to the MscL family. As to quaternary structure, homopentamer.

Its subcellular location is the cell inner membrane. Functionally, channel that opens in response to stretch forces in the membrane lipid bilayer. May participate in the regulation of osmotic pressure changes within the cell. This chain is Large-conductance mechanosensitive channel, found in Shewanella sp. (strain MR-4).